A 104-amino-acid chain; its full sequence is Ribonuclease P protein component 4 (104 aa).

Zn(2+) is bound by residues Cys-63, Cys-66, Cys-89, and Cys-92.

The protein belongs to the eukaryotic/archaeal RNase P protein component 4 family. As to quaternary structure, consists of a catalytic RNA component and at least 4-5 protein subunits. Zn(2+) serves as cofactor.

Its subcellular location is the cytoplasm. The catalysed reaction is Endonucleolytic cleavage of RNA, removing 5'-extranucleotides from tRNA precursor.. Its function is as follows. Part of ribonuclease P, a protein complex that generates mature tRNA molecules by cleaving their 5'-ends. The polypeptide is Ribonuclease P protein component 4 (Methanosphaera stadtmanae (strain ATCC 43021 / DSM 3091 / JCM 11832 / MCB-3)).